We begin with the raw amino-acid sequence, 351 residues long: Fruit bromelain (351 aa).

The signal sequence occupies residues 1–24 (MASKVQLVFLFLFLCAMWASPSAA). Positions 25–121 (SRDEPNDPMM…VVSFDDVNIS (97 aa)) are cleaved as a propeptide — activation peptide. A glycan (N-linked (GlcNAc...) asparagine) is linked at Asn-119. 3 cysteine pairs are disulfide-bonded: Cys-144–Cys-184, Cys-178–Cys-217, and Cys-273–Cys-325. Cys-147 is a catalytic residue. Residues His-279 and Asn-300 contribute to the active site.

Belongs to the peptidase C1 family.

It carries out the reaction Hydrolysis of proteins with broad specificity for peptide bonds. Bz-Phe-Val-Arg-|-NHMec is a good synthetic substrate, but there is no action on Z-Arg-Arg-|-NHMec (cf. stem bromelain).. Cysteine proteinase with a high level of diversity in substrate specificity. This chain is Fruit bromelain, found in Ananas comosus (Pineapple).